We begin with the raw amino-acid sequence, 60 residues long: MSIFRSLSSFNISFKSNKSNDFNFNNYNGLVNQSSNELSRWNPKETVVFVKQGGKDRIAA.

This is an uncharacterized protein from Dictyostelium discoideum (Social amoeba).